Reading from the N-terminus, the 396-residue chain is Elongation factor Tu (396 aa).

Positions K10 to E206 constitute a tr-type G domain. The interval G19 to T26 is G1. G19–T26 serves as a coordination point for GTP. T26 contributes to the Mg(2+) binding site. The tract at residues G60–A64 is G2. Positions D81–G84 are G3. Residues D81–H85 and N136–D139 each bind GTP. The interval N136–D139 is G4. Residues S174–L176 are G5.

This sequence belongs to the TRAFAC class translation factor GTPase superfamily. Classic translation factor GTPase family. EF-Tu/EF-1A subfamily. Monomer.

The protein localises to the cytoplasm. It catalyses the reaction GTP + H2O = GDP + phosphate + H(+). Its function is as follows. GTP hydrolase that promotes the GTP-dependent binding of aminoacyl-tRNA to the A-site of ribosomes during protein biosynthesis. This is Elongation factor Tu from Pelobacter propionicus (strain DSM 2379 / NBRC 103807 / OttBd1).